The chain runs to 396 residues: Cell division protein DivIB (396 aa).

Disordered regions lie at residues 1–23 and 37–116; these read MSKD…SEWQ and EVAL…ATKE. Residues 1-130 are Cytoplasmic-facing; the sequence is MSKDKKNEDK…AKIPGIHILR (130 aa). 2 stretches are compositionally biased toward basic and acidic residues: residues 37–65 and 75–116; these read EVAL…KQDQ and ESAK…ATKE. Residues 131-151 form a helical membrane-spanning segment; sequence AFTILFPSLLLLIVSAYLLSP. The Extracellular segment spans residues 152–396; the sequence is YATMKDIRVE…NQTNQRSSRR (245 aa). The region spanning 153–223 is the POTRA domain; the sequence is ATMKDIRVEG…TKFTIKVKEY (71 aa). Basic and acidic residues predominate over residues 361 to 385; the sequence is KAKQEAKEAEKKQEEEQKKQEEESN. Residues 361–396 are disordered; it reads KAKQEAKEAEKKQEEEQKKQEEESNRNQTNQRSSRR. Positions 386–396 are enriched in low complexity; it reads RNQTNQRSSRR.

It belongs to the FtsQ/DivIB family. DivIB subfamily.

It is found in the cell membrane. Its function is as follows. Cell division protein that may be involved in stabilizing or promoting the assembly of the division complex. In Streptococcus pneumoniae (strain ATCC BAA-255 / R6), this protein is Cell division protein DivIB.